Here is a 233-residue protein sequence, read N- to C-terminus: Biosynthetic peptidoglycan transglycosylase (233 aa).

The chain crosses the membrane as a helical span at residues 4–24; it reads LAYLAGCLIVGVVAMQVYFFL.

The protein belongs to the glycosyltransferase 51 family.

The protein localises to the cell inner membrane. The enzyme catalyses [GlcNAc-(1-&gt;4)-Mur2Ac(oyl-L-Ala-gamma-D-Glu-L-Lys-D-Ala-D-Ala)](n)-di-trans,octa-cis-undecaprenyl diphosphate + beta-D-GlcNAc-(1-&gt;4)-Mur2Ac(oyl-L-Ala-gamma-D-Glu-L-Lys-D-Ala-D-Ala)-di-trans,octa-cis-undecaprenyl diphosphate = [GlcNAc-(1-&gt;4)-Mur2Ac(oyl-L-Ala-gamma-D-Glu-L-Lys-D-Ala-D-Ala)](n+1)-di-trans,octa-cis-undecaprenyl diphosphate + di-trans,octa-cis-undecaprenyl diphosphate + H(+). Its pathway is cell wall biogenesis; peptidoglycan biosynthesis. Functionally, peptidoglycan polymerase that catalyzes glycan chain elongation from lipid-linked precursors. The polypeptide is Biosynthetic peptidoglycan transglycosylase (Cupriavidus metallidurans (strain ATCC 43123 / DSM 2839 / NBRC 102507 / CH34) (Ralstonia metallidurans)).